The following is a 317-amino-acid chain: tRNA pseudouridine synthase B (317 aa).

Catalysis depends on Asp-47, which acts as the Nucleophile.

The protein belongs to the pseudouridine synthase TruB family. Type 1 subfamily.

The catalysed reaction is uridine(55) in tRNA = pseudouridine(55) in tRNA. Functionally, responsible for synthesis of pseudouridine from uracil-55 in the psi GC loop of transfer RNAs. This chain is tRNA pseudouridine synthase B, found in Shewanella woodyi (strain ATCC 51908 / MS32).